Here is a 63-residue protein sequence, read N- to C-terminus: Large ribosomal subunit protein bL28 (63 aa).

This sequence belongs to the bacterial ribosomal protein bL28 family.

The sequence is that of Large ribosomal subunit protein bL28 from Desulfosudis oleivorans (strain DSM 6200 / JCM 39069 / Hxd3) (Desulfococcus oleovorans).